The primary structure comprises 655 residues: SRSF protein kinase 1 (655 aa).

The interval 1–57 is disordered; it reads MERKVLALQARKKRTKAKKDKAQRKSETQHRGSAPHSESDLPEQEEEILGSDDDEQE. Over residues 10-22 the composition is skewed to basic residues; sequence ARKKRTKAKKDKA. The segment covering 40 to 57 has biased composition (acidic residues); sequence DLPEQEEEILGSDDDEQE. Ser-51 carries the phosphoserine; by CK2 modification. Positions 80–653 constitute a Protein kinase domain; that stretch reads YHVIRKLGWG…AAECLRHPWL (574 aa). ATP contacts are provided by residues 86-94, Lys-109, and 166-168; these read LGWGHFSTV and EVL. Asp-213 functions as the Proton acceptor in the catalytic mechanism. Disordered stretches follow at residues 238 to 341 and 397 to 417; these read WQRS…QDQT and FLSS…CTPI. A compositionally biased stretch (basic residues) spans 265 to 276; sequence KNKKKKLKKKQK. Composition is skewed to basic and acidic residues over residues 277–288 and 304–318; these read RQAELLEKRMQE and NKQE…RPLK. Phosphoserine is present on residues Ser-309, Ser-311, and Ser-333. Phosphoserine; by CK2 is present on Ser-555.

Belongs to the protein kinase superfamily. CMGC Ser/Thr protein kinase family. As to quaternary structure, monomer. Isoform 2 is found in a multisubunit complex containing seven proteins, named toposome, which separates entangled circular chromatin DNA during chromosome segregation. Isoform 2 interacts with DNAJC8 and AHSA1/AHA1 and this mediates formation of a complex with the Hsp70 /Hsp90 machinery. Isoform 1 is found in a complex with: DHX9, MOV10, MATR3, HNRNPU, NCL, DDX21, HSD17B4, PABPC1, HNRNPM, IGF2BP1, SYNCRIP, RPL3, VIM, YBX1, NPM1, HNRNPA2B1, HNRNPC, RPLP0, RPL7A and RALY. Isoform 2 binds to IGF2BP1, SYNCRIP, HNRNPA2B1 and HNRNPC. Isoform 1 and isoform 2 interact with SAFB which inhibits its activity. Isoform 2 interacts with SAFB2 which inhibits its activity. (Microbial infection) Isoform 2 interacts with HHV-1 ICP27 protein. Requires Mg(2+) as cofactor. In terms of tissue distribution, isoform 2 is predominantly expressed in the testis but is also present at lower levels in heart, ovary, small intestine, liver, kidney, pancreas and skeletal muscle. Isoform 1 is only seen in the testis, at lower levels than isoform 2. Highly expressed in different erythroid and lymphoid cell lines, with isoform 2 being far more abundant than isoform 1.

It localises to the cytoplasm. The protein resides in the nucleus. Its subcellular location is the nucleus matrix. The protein localises to the microsome. It is found in the nucleoplasm. It localises to the nucleus speckle. The protein resides in the chromosome. It catalyses the reaction L-seryl-[protein] + ATP = O-phospho-L-seryl-[protein] + ADP + H(+). The enzyme catalyses L-threonyl-[protein] + ATP = O-phospho-L-threonyl-[protein] + ADP + H(+). Activated by phosphorylation on Ser-51 and Ser-555. Serine/arginine-rich protein-specific kinase which specifically phosphorylates its substrates at serine residues located in regions rich in arginine/serine dipeptides, known as RS domains and is involved in the phosphorylation of SR splicing factors and the regulation of splicing. Plays a central role in the regulatory network for splicing, controlling the intranuclear distribution of splicing factors in interphase cells and the reorganization of nuclear speckles during mitosis. Can influence additional steps of mRNA maturation, as well as other cellular activities, such as chromatin reorganization in somatic and sperm cells and cell cycle progression. Isoform 2 phosphorylates SFRS2, ZRSR2, LBR and PRM1. Isoform 2 phosphorylates SRSF1 using a directional (C-terminal to N-terminal) and a dual-track mechanism incorporating both processive phosphorylation (in which the kinase stays attached to the substrate after each round of phosphorylation) and distributive phosphorylation steps (in which the kinase and substrate dissociate after each phosphorylation event). The RS domain of SRSF1 binds first to a docking groove in the large lobe of the kinase domain of SRPK1. This induces certain structural changes in SRPK1 and/or RRM2 domain of SRSF1, allowing RRM2 to bind the kinase and initiate phosphorylation. The cycles continue for several phosphorylation steps in a processive manner (steps 1-8) until the last few phosphorylation steps (approximately steps 9-12). During that time, a mechanical stress induces the unfolding of the beta-4 motif in RRM2, which then docks at the docking groove of SRPK1. This also signals RRM2 to begin to dissociate, which facilitates SRSF1 dissociation after phosphorylation is completed. Isoform 2 can mediate hepatitis B virus (HBV) core protein phosphorylation. It plays a negative role in the regulation of HBV replication through a mechanism not involving the phosphorylation of the core protein but by reducing the packaging efficiency of the pregenomic RNA (pgRNA) without affecting the formation of the viral core particles. Isoform 1 and isoform 2 can induce splicing of exon 10 in MAPT/TAU. The ratio of isoform 1/isoform 2 plays a decisive role in determining cell fate in K-562 leukaemic cell line: isoform 2 favors proliferation where as isoform 1 favors differentiation. The chain is SRSF protein kinase 1 from Homo sapiens (Human).